Reading from the N-terminus, the 379-residue chain is NADH-quinone oxidoreductase subunit D 1 (379 aa).

The protein belongs to the complex I 49 kDa subunit family. As to quaternary structure, NDH-1 is composed of 14 different subunits. Subunits NuoB, C, D, E, F, and G constitute the peripheral sector of the complex.

The protein resides in the cell inner membrane. It carries out the reaction a quinone + NADH + 5 H(+)(in) = a quinol + NAD(+) + 4 H(+)(out). In terms of biological role, NDH-1 shuttles electrons from NADH, via FMN and iron-sulfur (Fe-S) centers, to quinones in the respiratory chain. The immediate electron acceptor for the enzyme in this species is believed to be ubiquinone. Couples the redox reaction to proton translocation (for every two electrons transferred, four hydrogen ions are translocated across the cytoplasmic membrane), and thus conserves the redox energy in a proton gradient. The polypeptide is NADH-quinone oxidoreductase subunit D 1 (Anaeromyxobacter sp. (strain K)).